Consider the following 196-residue polypeptide: V-type proton ATPase proteolipid subunit (196 aa).

The Lumenal portion of the chain corresponds to 1-25; it reads MFQLLSFLLSGEATAVERIITDACP. The helical transmembrane segment at 26-46 threads the bilayer; that stretch reads VYAPFFGAMGVTAALVFTVMG. At 47–72 the chain is on the cytoplasmic side; the sequence is AAYGTAKASVGISNMGVMKPDLVIKA. A helical membrane pass occupies residues 73–93; the sequence is FIPVIFAGVIAIYGLIICVIL. Over 94–111 the chain is Lumenal; the sequence is VGGIKPNANYTLMKSFTD. A helical membrane pass occupies residues 112 to 132; the sequence is LGAGLTVGLCGLAAGMAIGIV. The Cytoplasmic segment spans residues 133 to 150; the sequence is GDSGVRAFGQQPKLYVIM. The chain crosses the membrane as a helical span at residues 151 to 171; the sequence is MLILIFSEALGLYGLIIGILL. The Lumenal segment spans residues 172–196; the sequence is SSVSDTYCPGQALVPLNSGNVIGKN.

It belongs to the V-ATPase proteolipid subunit family. In terms of assembly, V-ATPase is a heteromultimeric enzyme composed of a peripheral catalytic V1 complex (main components: subunits A, B, C, D, E, and F) attached to an integral membrane V0 proton pore complex (main component: the proteolipid protein; which is present as a hexamer that forms the proton-conducting pore).

The protein resides in the vacuole membrane. Proton-conducting pore forming subunit of the membrane integral V0 complex of vacuolar ATPase. V-ATPase is responsible for acidifying a variety of intracellular compartments in eukaryotic cells. The polypeptide is V-type proton ATPase proteolipid subunit (vatP) (Dictyostelium discoideum (Social amoeba)).